The primary structure comprises 630 residues: Scarecrow-like protein 34 (630 aa).

In terms of domain architecture, GRAS spans lysine 240–valine 628. The tract at residues valine 247–tyrosine 312 is leucine repeat I (LRI). The segment at tyrosine 331–glycine 396 is VHIID. The VHIID signature appears at leucine 362–aspartate 366. Residues glutamate 412–glutamate 444 form a leucine repeat II (LRII) region. The segment at leucine 454–asparagine 549 is PFYRE. An SAW region spans residues alanine 552 to valine 628.

The protein belongs to the GRAS family.

The protein resides in the nucleus. Probable transcription factor involved in plant development. This Arabidopsis thaliana (Mouse-ear cress) protein is Scarecrow-like protein 34 (SCL34).